Here is a 58-residue protein sequence, read N- to C-terminus: U-scoloptoxin(14)-Sa1a (58 aa).

A signal peptide spans 1–18 (MNRILGMIFLFCLISCYA).

This sequence belongs to the scoloptoxin-14 family. In terms of processing, contains 4 disulfide bonds. As to expression, expressed by the venom gland.

It localises to the secreted. The chain is U-scoloptoxin(14)-Sa1a from Scolopendra alternans (Florida Keys giant centipede).